A 100-amino-acid chain; its full sequence is Large ribosomal subunit protein uL23 (100 aa).

Belongs to the universal ribosomal protein uL23 family. Part of the 50S ribosomal subunit. Contacts protein L29, and trigger factor when it is bound to the ribosome.

In terms of biological role, one of the early assembly proteins it binds 23S rRNA. One of the proteins that surrounds the polypeptide exit tunnel on the outside of the ribosome. Forms the main docking site for trigger factor binding to the ribosome. The polypeptide is Large ribosomal subunit protein uL23 (Dechloromonas aromatica (strain RCB)).